Reading from the N-terminus, the 110-residue chain is Host transcription reprogramming factor 2 (110 aa).

Residues Met-1–Ala-18 form the signal peptide. The segment at Ile-68–His-96 adopts a C2H2-type zinc-finger fold. The interval Lys-88–Thr-110 is disordered. Over residues Pro-100 to Thr-110 the composition is skewed to basic and acidic residues.

It is found in the secreted. The protein resides in the host nucleus. Secreted effector that translocates into the nuclei of host cells to reprogram the expression of immunity-associated genes by binding to effector binding elements (EBEs) in rice. Binds the 5'-CCACCTCC-3' EBE of promoters from targeted rice genes and probably recruits a yet to be determined host repressor. Causes ambivalent immunity with increased susceptibility to the hemibiotrophic pathogens Magnaporthe oryzae and Xanthomonas oryzae pv. oryzae, but enhances resistance to Cochliobolus miyabeanus, a necrotrophic pathogen. The sequence is that of Host transcription reprogramming factor 2 from Pyricularia oryzae (strain 70-15 / ATCC MYA-4617 / FGSC 8958) (Rice blast fungus).